The primary structure comprises 473 residues: Peptidoglycan DL-endopeptidase CwlO (473 aa).

An N-terminal signal peptide occupies residues 1–30 (MRKSLITLGLASVIGTSSFLIPFTSKTASA). 3 disordered regions span residues 31–52 (ETLDEKKQKIESKQSEVASSIE), 79–98 (ALDTSNKIEDKKEENDKTKE), and 237–337 (EASE…GTVI). A compositionally biased stretch (basic and acidic residues) spans 33 to 44 (LDEKKQKIESKQ). Polar residues predominate over residues 241 to 250 (LANQKANTEA). Composition is skewed to basic and acidic residues over residues 251-260 (EQARIKKEQE) and 267-277 (KKQEEAQKASD). The span at 291–337 (SSKASSSDDSSDNSSDNSSNGSSNSSSNGSSSKKSSGSNSNSGGTVI) shows a compositional bias: low complexity. Residues 340 to 471 (SGGIEGAISV…AAFKGVVRRV (132 aa)) form the NlpC/P60 domain. Cys377 acts as the Nucleophile in catalysis. The active-site Proton acceptor is His431. Residue Asn443 is part of the active site.

This sequence belongs to the peptidase C40 family. Post-translationally, identified in the extracellular proteome as a number of processing products of about 50 and 30 kDa.

It localises to the secreted. The protein resides in the cell wall. With respect to regulation, detected in exponentially growing cells, the 50 and 30 kDa processing products disappear upon entry into stationary phase with the concomitant appearance of a 20 kDa products. The 50 kDa form persists in the absence of extracellular proteases. Its function is as follows. The C-terminal part of CwlO shows a cell wall hydrolytic DL-endopeptidase activity. The sequence is that of Peptidoglycan DL-endopeptidase CwlO (cwlO) from Bacillus subtilis (strain 168).